The following is a 177-amino-acid chain: SsrA-binding protein (177 aa).

Disordered regions lie at residues 1–23 (MYVP…KDGK) and 148–177 (YDKR…QRGE). The span at 148–165 (YDKRQTLREKQDRRESDR) shows a compositional bias: basic and acidic residues.

Belongs to the SmpB family.

The protein resides in the cytoplasm. Functionally, required for rescue of stalled ribosomes mediated by trans-translation. Binds to transfer-messenger RNA (tmRNA), required for stable association of tmRNA with ribosomes. tmRNA and SmpB together mimic tRNA shape, replacing the anticodon stem-loop with SmpB. tmRNA is encoded by the ssrA gene; the 2 termini fold to resemble tRNA(Ala) and it encodes a 'tag peptide', a short internal open reading frame. During trans-translation Ala-aminoacylated tmRNA acts like a tRNA, entering the A-site of stalled ribosomes, displacing the stalled mRNA. The ribosome then switches to translate the ORF on the tmRNA; the nascent peptide is terminated with the 'tag peptide' encoded by the tmRNA and targeted for degradation. The ribosome is freed to recommence translation, which seems to be the essential function of trans-translation. This is SsrA-binding protein from Streptomyces avermitilis (strain ATCC 31267 / DSM 46492 / JCM 5070 / NBRC 14893 / NCIMB 12804 / NRRL 8165 / MA-4680).